Reading from the N-terminus, the 363-residue chain is Chorismate synthase (363 aa).

Position 48 (Arg-48) interacts with NADP(+). FMN is bound by residues 125–127 (RSS), 238–239 (NA), Gly-278, 293–297 (KPTAS), and Arg-319.

It belongs to the chorismate synthase family. As to quaternary structure, homotetramer. The cofactor is FMNH2.

It carries out the reaction 5-O-(1-carboxyvinyl)-3-phosphoshikimate = chorismate + phosphate. It participates in metabolic intermediate biosynthesis; chorismate biosynthesis; chorismate from D-erythrose 4-phosphate and phosphoenolpyruvate: step 7/7. Catalyzes the anti-1,4-elimination of the C-3 phosphate and the C-6 proR hydrogen from 5-enolpyruvylshikimate-3-phosphate (EPSP) to yield chorismate, which is the branch point compound that serves as the starting substrate for the three terminal pathways of aromatic amino acid biosynthesis. This reaction introduces a second double bond into the aromatic ring system. This chain is Chorismate synthase, found in Acinetobacter baumannii (strain AB0057).